We begin with the raw amino-acid sequence, 428 residues long: GTPase Obg (428 aa).

Residues 1–158 (MFVDQTKIDV…RTLRLELKVL (158 aa)) form the Obg domain. Residues 159-328 (ADVGLVGFPS…LMGKTADLVE (170 aa)) enclose the OBG-type G domain. GTP contacts are provided by residues 165-172 (GFPSVGKS), 190-194 (FTTLT), 212-215 (DLPG), 282-285 (TQMD), and 309-311 (SSV). Positions 172 and 192 each coordinate Mg(2+). Residues 350-428 (YKKPEDDGFK…IADFTFEFVD (79 aa)) form the OCT domain.

The protein belongs to the TRAFAC class OBG-HflX-like GTPase superfamily. OBG GTPase family. In terms of assembly, monomer. Mg(2+) is required as a cofactor.

The protein resides in the cytoplasm. Its function is as follows. An essential GTPase which binds GTP, GDP and possibly (p)ppGpp with moderate affinity, with high nucleotide exchange rates and a fairly low GTP hydrolysis rate. Plays a role in control of the cell cycle, stress response, ribosome biogenesis and in those bacteria that undergo differentiation, in morphogenesis control. This is GTPase Obg from Lactobacillus gasseri (strain ATCC 33323 / DSM 20243 / BCRC 14619 / CIP 102991 / JCM 1131 / KCTC 3163 / NCIMB 11718 / NCTC 13722 / AM63).